Reading from the N-terminus, the 575-residue chain is Alpha-(1,6)-fucosyltransferase (575 aa).

The Cytoplasmic segment spans residues 1 to 9 (MRPWTGSWR). The helical; Signal-anchor for type II membrane protein transmembrane segment at 10 to 30 (WIMLILFAWGTLLFYIGGHLV) threads the bilayer. Over 31-575 (RDNDHPDHSS…KVPHVPEAEK (545 aa)) the chain is Lumenal. 3 disulfides stabilise this stretch: C204-C266, C212-C230, and C218-C222. Residues 206 to 493 (KAKKLVCNIN…PDASANFHSL (288 aa)) form the GT23 domain. S278 bears the Phosphoserine mark. The SH3-binding motif lies at 299-305 (PRPPYLP). The interval 365–366 (RR) is important for donor substrate binding. C465 and C472 are disulfide-bonded. Residues 502 to 563 (QNAHNQIAIY…PSYKVREKIE (62 aa)) form the SH3 domain.

This sequence belongs to the glycosyltransferase 23 family. In terms of processing, tyrosine phosphorylated by PKDCC/VLK. As to expression, highest expression found in brain. Also found in heart, lung, spleen and kidney.

Its subcellular location is the golgi apparatus. It is found in the golgi stack membrane. It carries out the reaction N(4)-{beta-D-GlcNAc-(1-&gt;2)-alpha-D-Man-(1-&gt;3)-[beta-D-GlcNAc-(1-&gt;2)-alpha-D-Man-(1-&gt;6)]-beta-D-Man-(1-&gt;4)-beta-D-GlcNAc-(1-&gt;4)-beta-D-GlcNAc}-L-asparaginyl-[protein] + GDP-beta-L-fucose = an N(4)-{beta-D-GlcNAc-(1-&gt;2)-alpha-D-Man-(1-&gt;3)-[beta-D-GlcNAc-(1-&gt;2)-alpha-D-Man-(1-&gt;6)]-beta-D-Man-(1-&gt;4)-beta-D-GlcNAc-(1-&gt;4)-[alpha-L-Fuc-(1-&gt;6)]-beta-D-GlcNAc}-L-asparaginyl-[protein] + GDP + H(+). The protein operates within protein modification; protein glycosylation. In terms of biological role, catalyzes the addition of fucose in alpha 1-6 linkage to the first GlcNAc residue, next to the peptide chains in N-glycans. This is Alpha-(1,6)-fucosyltransferase (FUT8) from Bos taurus (Bovine).